A 122-amino-acid chain; its full sequence is Large ribosomal subunit protein uL14 (122 aa).

It belongs to the universal ribosomal protein uL14 family. Part of the 50S ribosomal subunit. Forms a cluster with proteins L3 and L19. In the 70S ribosome, L14 and L19 interact and together make contacts with the 16S rRNA in bridges B5 and B8.

Binds to 23S rRNA. Forms part of two intersubunit bridges in the 70S ribosome. This Phytoplasma mali (strain AT) protein is Large ribosomal subunit protein uL14.